The sequence spans 386 residues: Zinc finger protein 385A (386 aa).

Residues 74 to 98 form a Matrin-type 1 zinc finger; sequence ISCNVCQIRFNSQSQAEAHYKGNRH. Positions 88–193 are disordered; the sequence is QAEAHYKGNR…ASLPGGSKEE (106 aa). A compositionally biased stretch (basic and acidic residues) spans 103 to 121; sequence KGIEAAKTRGREPSVRESG. The interval 145–351 is necessary for binding to ITPR1, CEBPA and p53/TP53 mRNAs; the sequence is NGLGPAPGSP…AGSPLSLRPA (207 aa). S185 is subject to Phosphoserine. Residues 201–225 form a Matrin-type 2 zinc finger; sequence LYCALCKVAVNSLSQLEAHNKGTKH. T248 is modified (phosphothreonine). The segment at 261–285 adopts a Matrin-type 3 zinc-finger fold; it reads FHCEICNVKVNSEVQLKQHISSRRH. The tract at residues 279–305 is disordered; it reads HISSRRHRDGVAGKPNPLLSRHKKPRG.

In terms of assembly, interacts with p53/TP53; the interaction is direct and enhances p53/TP53 transactivation functions on cell-cycle arrest target genes, resulting in growth arrest. Interacts with ELAVL1; the interaction is indirect, mRNA-dependent and may regulate p53/TP53 expression. In terms of processing, ubiquitinated upon prolonged exposure to genotoxic stress, which leads to proteasomal degradation of ZNF385A and releases p53/TP53 from cell-cycle arrest target gene promoters. In terms of tissue distribution, expressed in brain and testis (at protein level). In brain, the expression is located to olfactory bulb, cerebral cortex, hippocampus, satellite cells and Purkinje cells of the cerebellum molecular layer. Detected in bone marrow, white and brown adipose tissue, lung and at lower levels in the thymus.

The protein resides in the cytoplasm. Its subcellular location is the nucleus. It is found in the nucleolus. It localises to the cell projection. The protein localises to the dendrite. RNA-binding protein that affects the localization and the translation of a subset of mRNA. May play a role in adipogenesis through binding to the 3'-UTR of CEBPA mRNA and regulation of its translation. Targets ITPR1 mRNA to dendrites in Purkinje cells, and may regulate its activity-dependent translation. With ELAVL1, binds the 3'-UTR of p53/TP53 mRNAs to control their nuclear export induced by CDKN2A. Hence, may regulate p53/TP53 expression and mediate in part the CDKN2A anti-proliferative activity. May also bind CCNB1 mRNA. Alternatively, may also regulate p53/TP53 activity through direct protein-protein interaction. Interacts with p53/TP53 and promotes cell-cycle arrest over apoptosis enhancing preferentially the DNA binding and transactivation of p53/TP53 on cell-cycle arrest target genes over proapoptotic target genes. May also regulate the ubiquitination and stability of CDKN1A promoting DNA damage-induced cell cycle arrest. Also plays a role in megakaryocytes differentiation. This is Zinc finger protein 385A (Znf385a) from Mus musculus (Mouse).